A 208-amino-acid polypeptide reads, in one-letter code: FMN-dependent NADH:quinone oxidoreductase 3 (208 aa).

It belongs to the azoreductase type 1 family. Homodimer. FMN serves as cofactor.

It carries out the reaction 2 a quinone + NADH + H(+) = 2 a 1,4-benzosemiquinone + NAD(+). The enzyme catalyses N,N-dimethyl-1,4-phenylenediamine + anthranilate + 2 NAD(+) = 2-(4-dimethylaminophenyl)diazenylbenzoate + 2 NADH + 2 H(+). In terms of biological role, quinone reductase that provides resistance to thiol-specific stress caused by electrophilic quinones. Also exhibits azoreductase activity. Catalyzes the reductive cleavage of the azo bond in aromatic azo compounds to the corresponding amines. In Bacillus cereus (strain ATCC 14579 / DSM 31 / CCUG 7414 / JCM 2152 / NBRC 15305 / NCIMB 9373 / NCTC 2599 / NRRL B-3711), this protein is FMN-dependent NADH:quinone oxidoreductase 3.